The chain runs to 705 residues: Beta-xylosidase (705 aa).

The protein belongs to the glycosyl hydrolase 52 family.

It catalyses the reaction Hydrolysis of (1-&gt;4)-beta-D-xylans, to remove successive D-xylose residues from the non-reducing termini.. It functions in the pathway glycan degradation; xylan degradation. The chain is Beta-xylosidase (xylA) from Geobacillus stearothermophilus (Bacillus stearothermophilus).